Consider the following 216-residue polypeptide: DegV domain-containing protein UU190 (216 aa).

Positions 1 to 215 (MLWKNLDELF…LNNFAILIEA (215 aa)) constitute a DegV domain. Ser26 contributes to the hexadecanoate binding site.

In terms of biological role, may bind long-chain fatty acids, such as palmitate, and may play a role in lipid transport or fatty acid metabolism. This is DegV domain-containing protein UU190 from Ureaplasma parvum serovar 3 (strain ATCC 700970).